The following is an 826-amino-acid chain: Arf-GAP with ANK repeat and PH domain-containing protein cnt-1 (826 aa).

One can recognise a PH domain in the interval 275–373 (DVMMEGYLYK…WMRALQRTIL (99 aa)). One can recognise an Arf-GAP domain in the interval 447–572 (TTAFEQVRRV…RFAVAEDTRA (126 aa)). A C4-type zinc finger spans residues 462-485 (CADCGSPAPKWVSINLGVVLCIEC). Residues 570-604 (TRARSSATNRQEHLKHKTSIGGNSSSNGVNRSSSY) form a disordered region. Positions 588 to 603 (SIGGNSSSNGVNRSSS) are enriched in low complexity. ANK repeat units lie at residues 690–719 (NGTT…KINM), 723–752 (KLNT…DSNL), and 756–789 (DSKT…NADF).

As to quaternary structure, interacts (via C-terminal ankyrin repeat) with rab-10 (GTP-bound form); the interaction is required for cnt-1 recruitment to endosomes. Interacts (via C-terminal ankyrin repeat) with rab-8 (GTP-bound form) and rab-35 (GTP-bound form). Cleaved by caspase ced-3 after Asp-382 and Asp-609. Cleavage at Asp-382 is required for subsequent cleavage at Asp-609.

Its subcellular location is the cytoplasm. The protein resides in the recycling endosome membrane. It is found in the basolateral cell membrane. The protein localises to the apical cell membrane. It localises to the cell membrane. GTPase-activating protein for the ADP ribosylation factor family. Regulates endosome recycling downstream of rab-10 and upstream of arf-6. Its function is as follows. Promotes apoptosis during embryonic development. Produced by caspase ced-3-mediated cleavage, and translocates to the plasma membrane where it prevents the activation of the prosurvival Akt-1/2 and sgk-1 signaling pathway by competing with Akt-1/2 for the binding to PtdIns(3,4,5)P3. This chain is Arf-GAP with ANK repeat and PH domain-containing protein cnt-1, found in Caenorhabditis elegans.